We begin with the raw amino-acid sequence, 97 residues long: Serine protease inhibitor Kazal-type 13 (97 aa).

Positions 1–26 (MTRRGCWPHRIIFSLILLTWTHVTLA) are cleaved as a signal peptide. The 62-residue stretch at 36 to 97 (NWPKPPCKMY…IEFVKYGKCE (62 aa)) folds into the Kazal-like domain. Disulfide bonds link cysteine 42–cysteine 78, cysteine 56–cysteine 75, and cysteine 64–cysteine 96.

Restricted to the epididymis, with highest levels in the initial segment, including epithelial cells, lumen, and sperm (at protein level). Localizes to the sperm heads, where it is restricted to the acrosomal region in epididymal spermatozoa, but not in testicular spermatozoa (at protein level).

The protein resides in the secreted. In terms of biological role, may be a serine protease inhibitor. Essential for sperm maturation and fertility. Inhibits sperm acrosome reaction, protecting sperm from premature reaction. This Rattus norvegicus (Rat) protein is Serine protease inhibitor Kazal-type 13 (Spink13).